Reading from the N-terminus, the 549-residue chain is Glucose-6-phosphate isomerase (549 aa).

3 positions are modified to N6-acetyllysine: Lys-80, Lys-228, and Lys-234. Glu-355 serves as the catalytic Proton donor. Residues His-386 and Lys-514 contribute to the active site.

This sequence belongs to the GPI family.

It is found in the cytoplasm. It catalyses the reaction alpha-D-glucose 6-phosphate = beta-D-fructose 6-phosphate. It functions in the pathway carbohydrate biosynthesis; gluconeogenesis. The protein operates within carbohydrate degradation; glycolysis; D-glyceraldehyde 3-phosphate and glycerone phosphate from D-glucose: step 2/4. Functionally, catalyzes the reversible isomerization of glucose-6-phosphate to fructose-6-phosphate. The chain is Glucose-6-phosphate isomerase from Escherichia coli O17:K52:H18 (strain UMN026 / ExPEC).